Consider the following 190-residue polypeptide: Protein hunchback (190 aa).

Disordered regions lie at residues 13–59, 86–110, and 142–190; these read EPMS…SSNL, AAMTPSPSNNDQNSPLTPPGLPNPM, and QTND…KYMA. The segment covering 17–31 has biased composition (basic residues); sequence HHHHHSHHHGHHHML. A compositionally biased stretch (polar residues) spans 90–100; the sequence is PSPSNNDQNSP. A compositionally biased stretch (basic and acidic residues) spans 171–190; that stretch reads EPEKDHDLISNSSEDMKYMA.

It belongs to the hunchback C2H2-type zinc-finger protein family.

The protein resides in the nucleus. Its function is as follows. Gap class segmentation protein that controls development of head structures. The chain is Protein hunchback (hb) from Scaptomyza crassifemur (Fruit fly).